The sequence spans 100 residues: MAKKSMIAREVKRKKLVKKYSAKRKALLDEFNAAKDPMERLEIHRKIQGLPRNSAPNRVRNRCWATGKPRGVYRDFGLCRNQLRQRAHNGELPGVVKSSW.

This sequence belongs to the universal ribosomal protein uS14 family. In terms of assembly, part of the 30S ribosomal subunit. Contacts proteins S3 and S10.

Its function is as follows. Binds 16S rRNA, required for the assembly of 30S particles and may also be responsible for determining the conformation of the 16S rRNA at the A site. This chain is Small ribosomal subunit protein uS14, found in Prochlorococcus marinus (strain AS9601).